Reading from the N-terminus, the 862-residue chain is MNGHFAAVDNGNGSSPDSNAHSFEHGIQVINEDKQYNTNLNEYLNETHVAEAGFNYHLISVFGSQSTGKSTLLNHLFGTQFSVMSERERRQTTKGIWMSKNKNEGKMADNILVMDVEGTDGRERGEDQDFERKSALFALATSEVLIVNIWEHQVGLYQGANMGLLKTVFEVNMQLFLKDKQNQTRSLLFFVIRDHIGVTPLANLRNTLIQDLTHIWSSISKPAGLENSKIEDYFDFAFAALPHKILQPDKFISEVQNLGSRFIAGHRNKDSDATDDQELTGGVFLPEYHRRIPADGLSIYAEGIWDQIVSNKDLDLPTQQELLAQFRCDEIAREVQIAFDAAIAPLEEQQAESTRAGKPAVLPNLGQIGAEAREKCVKNFETQASRYHKGVYTTKRAELEDKIDNRLKALYQAHLTAAHKAGVTAFSEAVANAVKAGQKAGGAYEFAEIVEKQKTKTLEIFKKEAQSLAIPGVAWSNFKPQYLIFEKELDEVSARLRKEEMRRLAIRVERWVKSRLGDAIGLEFNKLGSGRGGSGAPESGEKPATEKDIWDRVWKAFISIVGEAESRFTDRAKSFEASDDEVQVGLWRLRRKSWVALREKIEEEVMESNILMKLRENFEDKFRYDEDGVPRIWRPSDDIEGIYTRARESTLGLVPLLSRFRLTSTSAPPDLIEFVGPQPHGVEPGDEEDLTPIGGVDEDEGKSLEEETTILSEPKKQDLVVRFKKMADGVYVEAKRSAIGGITQVPLYFYAVLLVLGWNEFVMVLRNPILFLLLLLISGGTYVAYSLNLLGPMMQMANAASTQGMEIGKAKLRDFLENHEGARGALGMPPKNAQRVESGISMDTLDSNGKRKETGLGAEDDI.

The disordered stretch occupies residues 1 to 21 (MNGHFAAVDNGNGSSPDSNAH). The Cytoplasmic segment spans residues 1-744 (MNGHFAAVDN…KRSAIGGITQ (744 aa)). A compositionally biased stretch (polar residues) spans 11 to 21 (GNGSSPDSNAH). One can recognise a GB1/RHD3-type G domain in the interval 53-288 (GFNYHLISVF…LTGGVFLPEY (236 aa)). 63–70 (GSQSTGKS) serves as a coordination point for GTP. Positions 485–506 (FEKELDEVSARLRKEEMRRLAI) form a coiled coil. Residues 745–765 (VPLYFYAVLLVLGWNEFVMVL) form a helical membrane-spanning segment. The Lumenal segment spans residues 766 to 768 (RNP). A helical membrane pass occupies residues 769-789 (ILFLLLLLISGGTYVAYSLNL). At 790-862 (LGPMMQMANA…ETGLGAEDDI (73 aa)) the chain is on the cytoplasmic side. Residues 840–862 (ISMDTLDSNGKRKETGLGAEDDI) form a disordered region.

Belongs to the TRAFAC class dynamin-like GTPase superfamily. GB1/RHD3 GTPase family. RHD3 subfamily.

The protein localises to the endoplasmic reticulum membrane. In terms of biological role, cooperates with the reticulon proteins and tubule-shaping DP1 family proteins to generate and maintain the structure of the tubular endoplasmic reticulum network. Has GTPase activity, which is required for its function in ER organization. The polypeptide is Protein sey1 (sey1) (Neurospora crassa (strain ATCC 24698 / 74-OR23-1A / CBS 708.71 / DSM 1257 / FGSC 987)).